The primary structure comprises 1390 residues: MKDLLKFLKQQNKTEEFDAIRIGLASPDMVRSWSYGEVKKPETINYRTFKPERDGLFCARIFGPVKDYECLCGKYKRLKHRGVICEKCGVEVTLTKVRRDRMGHIDLASPVAHIWFLKSLPSRIGLMLDMTLRDIERVLYFESFVVTEPGMTTLERGQLLGEEEYLDALEEHGDEFEAKMGAEAVLDLLRELDLAQLIAEMREELPTINSETKRKKITKRLKLMESFHQSGNNPEWMIMTVLPVLPPDLRPLVPLDGGRFATSDLNDLYRRVINRNNRLKRLLDLAAPDIIVRNEKRMLQEAVDALLDNGRRGRAITGSNKRPLKSLADMIKGKQGRFRQNLLGKRVDYSGRSVITVGPTLKLHQCGLPKKMALELFKPFIYGKLERRGMATTIKAAKKMVEREMPEVWDVLDEVIREHPVLLNRAPTLHRLGIQAFEPVLIEGKAIHLHPLVCAAYNADFDGDQMAVHVPLTIEAQLEARALMMSTNNILSPANGEPIIVPSQDVVLGLYYMTRDRINAKGEGAIFKDPKEAEKAYRSGNADLHAIVKVRISQSVKNENGVVEDTITVIDTTVGRAILSLILPKGMPYESINQPLGKKQISGLINECYRRLGLKDTVMFADQIMYTGFHYAMKSGVSIGIDDLVIPPVKAQIIESAEAEVTEINQQFQSGLVTAGEKYNKVIDIWSRVNENLSREMMSNLSKDTVINAQGEEVEQASFNSVFMMADSGARGSAAQIRQLAGMRGLMARPDGSIIETPITANFREGLNVLQYFISTHGARKGLADTALKTANSGYLTRRLVDVAQDLVINEDDCGTEDGLTMKPLIEGGDVVEALRERVLGRVVAEDIVIPGTNTVLVERNIMLDEKLCDLLEEHSVDEVRVRSVITCDNDFGVCANCYGRDLARGHIINAGESVGVIAAQSIGEPGTQLTMRTFHIGGAASRASAENNVQVKTNGTLKLHNAKYVLNTDGKIAIISRSTEITIIDSYGREKERYKVPYGAVLTVQDNAEVQGNDIVATWDPHSHPIVLEHKSKVSFSDIDDSNTETQTDELTGLTRIVVKDLSKANAKEPKLIIESEERGLQETRLPSFTTIEVVDGTTVNPGDVLARIPQEGSKTRDITGGLPRVADLFEARKPKEPAILAEVTGTISFGKETKGKKRLVITPDEGDHYEEMIPKWRQLNVFEGERVSKGEVIADGPESPHDILRLRGVTHVANYIVNEVQEVYRLQGVKINDKHIETIIRQMLRKCTIMHGGDTDFLAGEQIEVARVNIANRDLEAQGKIPAKFEIQLMGITKASLATESFISAASFQETTRVLTDAAVNGKSDELRGLKENVIVGRLIPAGTGFSYHQERMARRKQRNVVEEQTVSAEEATQALTDALNADLSGNQ.

Residues Cys-70, Cys-72, Cys-85, and Cys-88 each coordinate Zn(2+). Mg(2+)-binding residues include Asp-460, Asp-462, and Asp-464. The Zn(2+) site is built by Cys-814, Cys-888, Cys-895, and Cys-898.

The protein belongs to the RNA polymerase beta' chain family. The RNAP catalytic core consists of 2 alpha, 1 beta, 1 beta' and 1 omega subunit. When a sigma factor is associated with the core the holoenzyme is formed, which can initiate transcription. It depends on Mg(2+) as a cofactor. Requires Zn(2+) as cofactor.

It carries out the reaction RNA(n) + a ribonucleoside 5'-triphosphate = RNA(n+1) + diphosphate. Functionally, DNA-dependent RNA polymerase catalyzes the transcription of DNA into RNA using the four ribonucleoside triphosphates as substrates. The chain is DNA-directed RNA polymerase subunit beta' from Pseudoalteromonas translucida (strain TAC 125).